A 318-amino-acid chain; its full sequence is Probable cell division protein WhiA (318 aa).

The H-T-H motif DNA-binding region spans 281 to 314 (SLKELGQMLVPPVGKSGVNHRLRKIEEISKKLKE).

Belongs to the WhiA family.

Involved in cell division and chromosome segregation. This is Probable cell division protein WhiA from Thermoanaerobacter pseudethanolicus (strain ATCC 33223 / 39E) (Clostridium thermohydrosulfuricum).